Reading from the N-terminus, the 312-residue chain is Regulation of nuclear pre-mRNA domain-containing protein 1A (312 aa).

At Ser2 the chain carries N-acetylserine. Residues 2–133 enclose the CID domain; the sequence is SAFSEAALEK…QLKQALYGDK (132 aa). Residues Ser153, Ser156, and Ser285 each carry the phosphoserine modification. Residues 244–286 adopt a coiled-coil conformation; it reads LADFLRCQKEALAEKEHKLEEYKRKLARVSLVRKELRSRIQSL.

The protein belongs to the UPF0400 (RTT103) family. May form a heterodimer with RPRD1B. Associates with the RNA polymerase II subunit POLR2A (via CTD phosphorylated at 'Ser-2' and 'Ser-7' of the heptad repeats).

Its subcellular location is the nucleus. Its function is as follows. Interacts with phosphorylated C-terminal heptapeptide repeat domain (CTD) of the largest RNA polymerase II subunit POLR2A, and participates in dephosphorylation of the CTD by RPAP2. May act as a negative regulator of cyclin-D1 (CCND1) and cyclin-E (CCNE1) in the cell cycle. In Pongo abelii (Sumatran orangutan), this protein is Regulation of nuclear pre-mRNA domain-containing protein 1A (RPRD1A).